The following is a 125-amino-acid chain: Small ribosomal subunit protein uS12 (125 aa).

Aspartate 89 is subject to 3-methylthioaspartic acid.

This sequence belongs to the universal ribosomal protein uS12 family. As to quaternary structure, part of the 30S ribosomal subunit. Contacts proteins S8 and S17. May interact with IF1 in the 30S initiation complex.

In terms of biological role, with S4 and S5 plays an important role in translational accuracy. Functionally, interacts with and stabilizes bases of the 16S rRNA that are involved in tRNA selection in the A site and with the mRNA backbone. Located at the interface of the 30S and 50S subunits, it traverses the body of the 30S subunit contacting proteins on the other side and probably holding the rRNA structure together. The combined cluster of proteins S8, S12 and S17 appears to hold together the shoulder and platform of the 30S subunit. In Cupriavidus necator (strain ATCC 17699 / DSM 428 / KCTC 22496 / NCIMB 10442 / H16 / Stanier 337) (Ralstonia eutropha), this protein is Small ribosomal subunit protein uS12.